A 263-amino-acid chain; its full sequence is MVQCSNNLLGILNFFTFLLSIPILSAGIWLGKNAATECERFLDKPMVVLGIFLMFVSIAGLVGACCRVSCLLWLYLFAMFLLILLGFCFTIFAFAVTNRGAGEVISDRGYKEYHVADYSNWLQKRVNNAKNWERIRSCLMYSDVCSTYRTRYASINVEDFYKSNLNALQSGCCKPSNDCNFTYVNPTTWTKTPGPYKNEDCNVWDNKPGTLCYDCEACKAGLLDNIKNSWKKVAKVNIVFLIFLIIVYSVGCCAFRNNRKRSW.

Over 1-7 (MVQCSNN) the chain is Cytoplasmic. The chain crosses the membrane as a helical span at residues 8–28 (LLGILNFFTFLLSIPILSAGI). Over 29 to 45 (WLGKNAATECERFLDKP) the chain is Extracellular. A helical membrane pass occupies residues 46-66 (MVVLGIFLMFVSIAGLVGACC). Residues 67-75 (RVSCLLWLY) are Cytoplasmic-facing. A helical membrane pass occupies residues 76-96 (LFAMFLLILLGFCFTIFAFAV). Over 97 to 234 (TNRGAGEVIS…NIKNSWKKVA (138 aa)) the chain is Extracellular. Asn180 carries N-linked (GlcNAc...) asparagine glycosylation. The chain crosses the membrane as a helical span at residues 235-255 (KVNIVFLIFLIIVYSVGCCAF). Over 256-263 (RNNRKRSW) the chain is Cytoplasmic.

It belongs to the tetraspanin (TM4SF) family.

It is found in the membrane. In terms of biological role, may be involved in the regulation of cell differentiation. The sequence is that of Tetraspanin-7 (TET7) from Arabidopsis thaliana (Mouse-ear cress).